Consider the following 737-residue polypeptide: Protein kinase C epsilon type (737 aa).

The region spanning methionine 1–isoleucine 117 is the C2 domain. The residue at position 62 (serine 62) is a Phosphoserine. The segment at glycine 169–cysteine 220 adopts a Phorbol-ester/DAG-type 1 zinc-finger fold. The short motif at leucine 223 to threonine 228 is the Interaction with actin element. Position 228 is a phosphothreonine (threonine 228). Phosphoserine is present on serine 234. The segment at proline 242–cysteine 292 adopts a Phorbol-ester/DAG-type 2 zinc-finger fold. At threonine 309 the chain carries Phosphothreonine. The tract at residues proline 310–leucine 356 is disordered. A phosphoserine mark is found at serine 316, serine 329, serine 337, and serine 346. Residue threonine 349 is modified to Phosphothreonine. Serine 350 is subject to Phosphoserine; by MAPK11 and MAPK14. Serine 368 and serine 388 each carry phosphoserine. The disordered stretch occupies residues phenylalanine 369 to glycine 398. Residues phenylalanine 408–phenylalanine 668 form the Protein kinase domain. ATP-binding positions include leucine 414–valine 422 and lysine 437. The Proton acceptor role is filled by aspartate 532. Threonine 566 is modified (phosphothreonine; by PDPK1). In terms of domain architecture, AGC-kinase C-terminal spans lysine 669 to proline 737. Residues threonine 703 and threonine 710 each carry the phosphothreonine modification. Phosphoserine is present on serine 729.

Belongs to the protein kinase superfamily. AGC Ser/Thr protein kinase family. PKC subfamily. In terms of assembly, forms a ternary complex with TRIM63 and RACK1/GN2BL1. Can form a complex with PDLIM5 and N-type calcium channel. Interacts with COPB1. Interacts with DGKQ. Interacts with STAT3. Interacts with YWHAB. Interacts with HSP90AB1; promotes functional activation in a heat shock-dependent manner. Interacts (via phorbol-ester/DAG-type 2 domain) with PRPH and VIM. Interacts with NLRP5/MATER. In terms of processing, phosphorylation on Thr-566 by PDPK1 triggers autophosphorylation on Ser-729. Phosphorylation in the hinge domain at Ser-350 by MAPK11 or MAPK14, Ser-346 by GSK3B and Ser-368 by autophosphorylation is required for interaction with YWHAB. In response to growth factors, phosphorylated at Thr-703 and Ser-729 by the mTORC2 complex, promoting autophosphorylation and activation of PRKCE.

The protein resides in the cytoplasm. It is found in the cytoskeleton. The protein localises to the cell membrane. Its subcellular location is the perinuclear region. It localises to the nucleus. The catalysed reaction is L-seryl-[protein] + ATP = O-phospho-L-seryl-[protein] + ADP + H(+). It carries out the reaction L-threonyl-[protein] + ATP = O-phospho-L-threonyl-[protein] + ADP + H(+). With respect to regulation, novel PKCs (PRKCD, PRKCE, PRKCH and PRKCQ) are calcium-insensitive, but activated by diacylglycerol (DAG) and phosphatidylserine. Three specific sites; Thr-566 (activation loop of the kinase domain), Thr-710 (turn motif) and Ser-729 (hydrophobic region), need to be phosphorylated for its full activation. In terms of biological role, calcium-independent, phospholipid- and diacylglycerol (DAG)-dependent serine/threonine-protein kinase that plays essential roles in the regulation of multiple cellular processes linked to cytoskeletal proteins, such as cell adhesion, motility, migration and cell cycle, functions in neuron growth and ion channel regulation, and is involved in immune response, cancer cell invasion and regulation of apoptosis. Mediates cell adhesion to the extracellular matrix via integrin-dependent signaling, by mediating angiotensin-2-induced activation of integrin beta-1 (ITGB1) in cardiac fibroblasts. Phosphorylates MARCKS, which phosphorylates and activates PTK2/FAK, leading to the spread of cardiomyocytes. Involved in the control of the directional transport of ITGB1 in mesenchymal cells by phosphorylating vimentin (VIM), an intermediate filament (IF) protein. In epithelial cells, associates with and phosphorylates keratin-8 (KRT8), which induces targeting of desmoplakin at desmosomes and regulates cell-cell contact. Phosphorylates IQGAP1, which binds to CDC42, mediating epithelial cell-cell detachment prior to migration. During cytokinesis, forms a complex with YWHAB, which is crucial for daughter cell separation, and facilitates abscission by a mechanism which may implicate the regulation of RHOA. In cardiac myocytes, regulates myofilament function and excitation coupling at the Z-lines, where it is indirectly associated with F-actin via interaction with COPB1. During endothelin-induced cardiomyocyte hypertrophy, mediates activation of PTK2/FAK, which is critical for cardiomyocyte survival and regulation of sarcomere length. Plays a role in the pathogenesis of dilated cardiomyopathy via persistent phosphorylation of troponin I (TNNI3). Involved in nerve growth factor (NFG)-induced neurite outgrowth and neuron morphological change independently of its kinase activity, by inhibition of RHOA pathway, activation of CDC42 and cytoskeletal rearrangement. May be involved in presynaptic facilitation by mediating phorbol ester-induced synaptic potentiation. Phosphorylates gamma-aminobutyric acid receptor subunit gamma-2 (GABRG2), which reduces the response of GABA receptors to ethanol and benzodiazepines and may mediate acute tolerance to the intoxicating effects of ethanol. Upon PMA treatment, phosphorylates the capsaicin- and heat-activated cation channel TRPV1, which is required for bradykinin-induced sensitization of the heat response in nociceptive neurons. Is able to form a complex with PDLIM5 and N-type calcium channel, and may enhance channel activities and potentiates fast synaptic transmission by phosphorylating the pore-forming alpha subunit CACNA1B (CaV2.2). Downstream of TLR4, plays an important role in the lipopolysaccharide (LPS)-induced immune response by phosphorylating and activating TICAM2/TRAM, which in turn activates the transcription factor IRF3 and subsequent cytokines production. In differentiating erythroid progenitors, is regulated by EPO and controls the protection against the TNFSF10/TRAIL-mediated apoptosis, via BCL2. May be involved in the regulation of the insulin-induced phosphorylation and activation of AKT1. Phosphorylates NLRP5/MATER and may thereby modulate AKT pathway activation in cumulus cells. Phosphorylates and activates LRRK1, which phosphorylates RAB proteins involved in intracellular trafficking. The polypeptide is Protein kinase C epsilon type (Prkce) (Rattus norvegicus (Rat)).